Consider the following 1406-residue polypeptide: DNA-directed RNA polymerase subunit beta' (1406 aa).

Zn(2+) contacts are provided by Cys70, Cys72, Cys85, and Cys88. Positions 460, 462, and 464 each coordinate Mg(2+). Residues Cys814, Cys888, Cys895, and Cys898 each coordinate Zn(2+).

Belongs to the RNA polymerase beta' chain family. In terms of assembly, the RNAP catalytic core consists of 2 alpha, 1 beta, 1 beta' and 1 omega subunit. When a sigma factor is associated with the core the holoenzyme is formed, which can initiate transcription. The cofactor is Mg(2+). It depends on Zn(2+) as a cofactor.

It carries out the reaction RNA(n) + a ribonucleoside 5'-triphosphate = RNA(n+1) + diphosphate. Functionally, DNA-dependent RNA polymerase catalyzes the transcription of DNA into RNA using the four ribonucleoside triphosphates as substrates. The chain is DNA-directed RNA polymerase subunit beta' from Colwellia psychrerythraea (strain 34H / ATCC BAA-681) (Vibrio psychroerythus).